Consider the following 527-residue polypeptide: UDP-glucuronosyltransferase 2A3 (527 aa).

Residues 1–23 (MRSEKSALVFLLLQLFCVGCGFC) form the signal peptide. Residues 24-486 (GKVLVWPCDM…AAHNLTWFQH (463 aa)) are Extracellular-facing. A glycan (N-linked (GlcNAc...) asparagine) is linked at Asn-313. Residues 487–507 (YSIDVIGFLLACVATAIFLFT) form a helical membrane-spanning segment. Over 508–523 (KCCLFSCQKFNKTRKI) the chain is Cytoplasmic.

Belongs to the UDP-glycosyltransferase family.

Its subcellular location is the membrane. The enzyme catalyses glucuronate acceptor + UDP-alpha-D-glucuronate = acceptor beta-D-glucuronoside + UDP + H(+). Functionally, UDP-glucuronosyltransferases catalyze phase II biotransformation reactions in which lipophilic substrates are conjugated with glucuronic acid to increase water solubility and enhance excretion. They are of major importance in the conjugation and subsequent elimination of potentially toxic xenobiotics and endogenous compounds. In Pongo abelii (Sumatran orangutan), this protein is UDP-glucuronosyltransferase 2A3 (UGT2A3).